Reading from the N-terminus, the 473-residue chain is H(+)/Cl(-) exchange transporter ClcA (473 aa).

Residues Met1–Pro32 are Cytoplasmic-facing. A helical membrane pass occupies residues Leu33–Val69. Residues His70–Pro76 are Periplasmic-facing. Residues Leu77 to Tyr100 form a helical membrane-spanning segment. A Selectivity filter part_1 motif is present at residues Gly106 to Pro110. Ser107 lines the chloride pocket. The helical intramembrane region spans Ile109–Leu116. The Cytoplasmic segment spans residues Glu117–Arg123. A run of 2 helical transmembrane segments spans residues Trp124 to Gly141 and Glu148 to Phe166. The short motif at Gly146 to Pro150 is the Selectivity filter part_2 element. At Arg167–Thr176 the chain is on the cytoplasmic side. 2 consecutive intramembrane regions (helical) follow at residues Leu177 to Ala189 and Pro193 to Ile201. At Glu202–Ser214 the chain is on the cytoplasmic side. A helical membrane pass occupies residues Ile215–Phe232. The Periplasmic portion of the chain corresponds to Asn233–Leu252. Residues Trp253–His281 form a helical membrane-spanning segment. Residues Arg282–Asn287 lie on the Cytoplasmic side of the membrane. Residues Ile288 to Ala309 traverse the membrane as a helical segment. The Periplasmic segment spans residues Pro310 to Ser329. The next 2 membrane-spanning stretches (helical) occupy residues Met330–Ser349 and Gly355–Val376. The Selectivity filter part_3 motif lies at Gly355–Pro359. The chloride site is built by Ile356 and Phe357. Residues Glu377–Ala386 lie on the Periplasmic side of the membrane. Positions Gly387–Ser401 form an intramembrane region, helical. Residues Ile402–Ala404 constitute an intramembrane region (note=Loop between two helices). The helical intramembrane region spans Pro405–Thr416. The note=Loop between two helices intramembrane region spans Asp417–Leu421. A helical transmembrane segment spans residues Ile422–Phe438. Residues Thr439–Thr473 are Cytoplasmic-facing. Tyr445 is a chloride binding site.

The protein belongs to the chloride channel (TC 2.A.49) family. ClcA subfamily. As to quaternary structure, homodimer.

The protein resides in the cell inner membrane. The catalysed reaction is 2 chloride(in) + H(+)(out) = 2 chloride(out) + H(+)(in). Proton-coupled chloride transporter. Functions as antiport system and exchanges two chloride ions for 1 proton. Probably acts as an electrical shunt for an outwardly-directed proton pump that is linked to amino acid decarboxylation, as part of the extreme acid resistance (XAR) response. The polypeptide is H(+)/Cl(-) exchange transporter ClcA (Escherichia coli O9:H4 (strain HS)).